Here is a 439-residue protein sequence, read N- to C-terminus: MEMEQEKMNLSQELSADSASYNCSACHGDETWSYNHPIRGRAKSRSLSASPALGSTKEFRRTRSLHGPCPVTTFGPKACVLQNPQTIMHIQDPASQRLTWNKSPKSVLVIKKIRDASLLQPFKELCIYLMEENNMIVYVEKKVLEDPAIVSDENFGPVKKKFCTFREDYDDISNQIDFIICLGGDGTLLYASSLFQGSVPPVMAFHLGSLGFLTPFNFENFQSQVNQVIEGNAAVILRSRLKVRVVKEPRDKKTAIHNGLSENGLDTEGGKQAMQYQVLNEVVIDRGPSSYLSNVDVYLDGHLITTVQGDGVIVSTPTGSTAYAAAAGASMVHPNVPAIMVTPICPHSLSFRPIVVPAGVELKIMLSPEARNTAWVSFDGRKRQEIRHGDSISITTSCYPLPSICVCDPVSDWFESLAQCLHWNVRKKQAHFPEDEEDS.

A phosphoserine mark is found at serine 46, serine 48, serine 50, serine 55, and serine 64.

This sequence belongs to the NAD kinase family. The cofactor is a divalent metal cation.

It catalyses the reaction NAD(+) + ATP = ADP + NADP(+) + H(+). In Mus musculus (Mouse), this protein is NAD kinase (Nadk).